We begin with the raw amino-acid sequence, 239 residues long: Pyridoxine 5'-phosphate synthase (239 aa).

Residue Asn-7 participates in 3-amino-2-oxopropyl phosphate binding. 9–10 contributes to the 1-deoxy-D-xylulose 5-phosphate binding site; it reads DH. Arg-18 is a binding site for 3-amino-2-oxopropyl phosphate. The Proton acceptor role is filled by His-43. 1-deoxy-D-xylulose 5-phosphate is bound by residues Arg-45 and His-50. The active-site Proton acceptor is Glu-70. Thr-100 serves as a coordination point for 1-deoxy-D-xylulose 5-phosphate. The active-site Proton donor is His-191. 3-amino-2-oxopropyl phosphate is bound by residues Gly-192 and 213-214; that span reads GH.

This sequence belongs to the PNP synthase family. In terms of assembly, homooctamer; tetramer of dimers.

It localises to the cytoplasm. It carries out the reaction 3-amino-2-oxopropyl phosphate + 1-deoxy-D-xylulose 5-phosphate = pyridoxine 5'-phosphate + phosphate + 2 H2O + H(+). The protein operates within cofactor biosynthesis; pyridoxine 5'-phosphate biosynthesis; pyridoxine 5'-phosphate from D-erythrose 4-phosphate: step 5/5. Catalyzes the complicated ring closure reaction between the two acyclic compounds 1-deoxy-D-xylulose-5-phosphate (DXP) and 3-amino-2-oxopropyl phosphate (1-amino-acetone-3-phosphate or AAP) to form pyridoxine 5'-phosphate (PNP) and inorganic phosphate. This is Pyridoxine 5'-phosphate synthase from Geotalea uraniireducens (strain Rf4) (Geobacter uraniireducens).